We begin with the raw amino-acid sequence, 312 residues long: Bifunctional pinoresinol-lariciresinol reductase 1 (312 aa).

NADP(+) is bound by residues 10–16, Arg35, and Lys44; that span reads GGTGYIG. Lys136 functions as the Proton acceptor in the catalytic mechanism. Arg140 serves as a coordination point for NADP(+). Position 268 (His268) interacts with substrate.

It belongs to the NmrA-type oxidoreductase family. Isoflavone reductase subfamily. In terms of assembly, dimer. In terms of tissue distribution, expressed in seeds and roots, but not in stems. Detected in leaves.

It catalyses the reaction (-)-lariciresinol + NADP(+) = (-)-pinoresinol + NADPH + H(+). It carries out the reaction (+)-secoisolariciresinol + NADP(+) = (-)-lariciresinol + NADPH + H(+). In terms of biological role, reductase involved in lignan biosynthesis. Catalyzes the enantioselective conversion of (-)-pinoresinol into (-)-lariciresinol and of (-)-lariciresinol into (+)-secoisolariciresinol. Abstracts the 4R-hydride from the NADPH cofactor during catalysis. This is Bifunctional pinoresinol-lariciresinol reductase 1 (PLR_Lu1) from Linum usitatissimum (Flax).